Reading from the N-terminus, the 115-residue chain is Large ribosomal subunit protein bL20c (115 aa).

This sequence belongs to the bacterial ribosomal protein bL20 family.

Its subcellular location is the plastid. The protein resides in the chloroplast. Its function is as follows. Binds directly to 23S ribosomal RNA and is necessary for the in vitro assembly process of the 50S ribosomal subunit. It is not involved in the protein synthesizing functions of that subunit. This is Large ribosomal subunit protein bL20c from Chaetosphaeridium globosum (Charophycean green alga).